A 210-amino-acid polypeptide reads, in one-letter code: Cuticle collagen 2C (210 aa).

Residues 11 to 210 are disordered; that stretch reads CTGGQAGPPG…GVFFEDGTRR (200 aa). Composition is skewed to pro residues over residues 40-76 and 88-103; these read PGRP…PGEP and DAPP…PGPP. Residues 105-122 are compositionally biased toward low complexity; the sequence is KAGAPGAAGQPGANAPSE. A compositionally biased stretch (pro residues) spans 123-144; the sequence is PLVPGPPGPPGPTGPEGPPGPN. A compositionally biased stretch (low complexity) spans 167–179; that stretch reads HPGAPGNAGHPGQ.

The protein belongs to the cuticular collagen family.

Its function is as follows. Nematode cuticles are composed largely of collagen-like proteins. The cuticle functions both as an exoskeleton and as a barrier to protect the worm from its environment. The polypeptide is Cuticle collagen 2C (2C) (Haemonchus contortus (Barber pole worm)).